A 103-amino-acid polypeptide reads, in one-letter code: Small ribosomal subunit protein uS10 (103 aa).

It belongs to the universal ribosomal protein uS10 family. Part of the 30S ribosomal subunit.

In terms of biological role, involved in the binding of tRNA to the ribosomes. This is Small ribosomal subunit protein uS10 from Shewanella denitrificans (strain OS217 / ATCC BAA-1090 / DSM 15013).